A 161-amino-acid polypeptide reads, in one-letter code: Nucleoside diphosphate kinase (161 aa).

ATP-binding residues include Lys-13, Phe-61, Arg-89, Thr-95, Arg-106, and Asn-116. Catalysis depends on His-119, which acts as the Pros-phosphohistidine intermediate.

Belongs to the NDK family. The cofactor is Mg(2+).

It localises to the cytoplasm. The enzyme catalyses a 2'-deoxyribonucleoside 5'-diphosphate + ATP = a 2'-deoxyribonucleoside 5'-triphosphate + ADP. It catalyses the reaction a ribonucleoside 5'-diphosphate + ATP = a ribonucleoside 5'-triphosphate + ADP. In terms of biological role, major role in the synthesis of nucleoside triphosphates other than ATP. The ATP gamma phosphate is transferred to the NDP beta phosphate via a ping-pong mechanism, using a phosphorylated active-site intermediate. The sequence is that of Nucleoside diphosphate kinase from Halobacterium salinarum (strain ATCC 29341 / DSM 671 / R1).